A 957-amino-acid chain; its full sequence is Glycine dehydrogenase (decarboxylating) (957 aa).

K708 is modified (N6-(pyridoxal phosphate)lysine).

Belongs to the GcvP family. In terms of assembly, the glycine cleavage system is composed of four proteins: P, T, L and H. Pyridoxal 5'-phosphate serves as cofactor.

The catalysed reaction is N(6)-[(R)-lipoyl]-L-lysyl-[glycine-cleavage complex H protein] + glycine + H(+) = N(6)-[(R)-S(8)-aminomethyldihydrolipoyl]-L-lysyl-[glycine-cleavage complex H protein] + CO2. The glycine cleavage system catalyzes the degradation of glycine. The P protein binds the alpha-amino group of glycine through its pyridoxal phosphate cofactor; CO(2) is released and the remaining methylamine moiety is then transferred to the lipoamide cofactor of the H protein. This Escherichia coli (strain SE11) protein is Glycine dehydrogenase (decarboxylating).